A 369-amino-acid polypeptide reads, in one-letter code: Maltose/maltodextrin import ATP-binding protein MalK (369 aa).

The ABC transporter domain maps to 4–234 (VQLRNVTKAW…PADRFVAGFI (231 aa)). Residue 36 to 43 (GPSGCGKS) participates in ATP binding.

This sequence belongs to the ABC transporter superfamily. Maltooligosaccharide importer (TC 3.A.1.1.1) family. In terms of assembly, the complex is composed of two ATP-binding proteins (MalK), two transmembrane proteins (MalG and MalK) and a solute-binding protein (MalE).

The protein resides in the cell inner membrane. It catalyses the reaction D-maltose(out) + ATP + H2O = D-maltose(in) + ADP + phosphate + H(+). Part of the ABC transporter complex MalEFGK involved in maltose/maltodextrin import. Responsible for energy coupling to the transport system. In Salmonella paratyphi A (strain ATCC 9150 / SARB42), this protein is Maltose/maltodextrin import ATP-binding protein MalK.